Reading from the N-terminus, the 153-residue chain is Small ribosomal subunit protein uS13 (153 aa).

The protein belongs to the universal ribosomal protein uS13 family. Part of the 30S ribosomal subunit. Forms a loose heterodimer with protein S19. Forms two bridges to the 50S subunit in the 70S ribosome.

Functionally, located at the top of the head of the 30S subunit, it contacts several helices of the 16S rRNA. In the 70S ribosome it contacts the 23S rRNA (bridge B1a) and protein L5 of the 50S subunit (bridge B1b), connecting the 2 subunits; these bridges are implicated in subunit movement. The polypeptide is Small ribosomal subunit protein uS13 (Pyrobaculum calidifontis (strain DSM 21063 / JCM 11548 / VA1)).